We begin with the raw amino-acid sequence, 315 residues long: Protoheme IX farnesyltransferase (315 aa).

The next 9 helical transmembrane spans lie at 32–52 (VMSLVVFTGLVGLVLAPGHMN), 53–73 (PVLAVISILCIAVGAGASGAL), 93–113 (IPAGIIAPNQVLAFGLTLSAF), 120–140 (LMVNWLAAALLAFTIFFYAVI), 153–173 (IVIGGAAGAFPPMIGWAAATG), 180–200 (LVLFMIIFLWTPPHFWALSLF), 226–246 (ALFYAVLMAPVGVLPWVMGFA), 249–269 (FYGVVSTLLGLAFVYYAWRLW), and 295–315 (IFAVLLFEALTFKLLAAFGVF).

It belongs to the UbiA prenyltransferase family. Protoheme IX farnesyltransferase subfamily.

Its subcellular location is the cell inner membrane. It catalyses the reaction heme b + (2E,6E)-farnesyl diphosphate + H2O = Fe(II)-heme o + diphosphate. It participates in porphyrin-containing compound metabolism; heme O biosynthesis; heme O from protoheme: step 1/1. Converts heme B (protoheme IX) to heme O by substitution of the vinyl group on carbon 2 of heme B porphyrin ring with a hydroxyethyl farnesyl side group. This chain is Protoheme IX farnesyltransferase, found in Brucella canis (strain ATCC 23365 / NCTC 10854 / RM-666).